A 479-amino-acid polypeptide reads, in one-letter code: Glycogen synthase (479 aa).

Position 15 (K15) interacts with ADP-alpha-D-glucose.

It belongs to the glycosyltransferase 1 family. Bacterial/plant glycogen synthase subfamily.

It catalyses the reaction [(1-&gt;4)-alpha-D-glucosyl](n) + ADP-alpha-D-glucose = [(1-&gt;4)-alpha-D-glucosyl](n+1) + ADP + H(+). The protein operates within glycan biosynthesis; glycogen biosynthesis. Its function is as follows. Synthesizes alpha-1,4-glucan chains using ADP-glucose. The sequence is that of Glycogen synthase from Nostoc punctiforme (strain ATCC 29133 / PCC 73102).